Consider the following 57-residue polypeptide: Large ribosomal subunit protein bL32 (57 aa).

Residues 1–20 show a composition bias toward basic residues; the sequence is MAVPKKKTSKGKRNQRHAVW. Residues 1 to 23 form a disordered region; that stretch reads MAVPKKKTSKGKRNQRHAVWKAK.

The protein belongs to the bacterial ribosomal protein bL32 family.

This Prochlorococcus marinus (strain SARG / CCMP1375 / SS120) protein is Large ribosomal subunit protein bL32.